Consider the following 429-residue polypeptide: MVNPEENNRNLVVKPITEILQDDDKRSRKFGVEMKRQNRRALGVINHNLVGAKAYPCVVNKRRGLSQRKQESCDKKKLDSLHPSISRSQEETKKLKPSGNEFGDCIFIDEEEEKNEEVTLDQPMPMSLEEPYIEFDPMEEEVEMEDMEEEQEEPVLDIDEYDANNSLAAVEYVQDLYDFYRKTERFSCVPLDYMAQQFDISDKMRAILIDWLIEVHDKFELMNETLFLTVNLIDRFLSKQAVARKKLQLVGLVALLLACKYEEVSVPIVEDLVVISDKAYTRTDVLEMEKIMLSTLQFNMSLPTQYPFLKRFLKAAQSDKKLEILASFLIELALVDYEMVRYPPSLLAATAVYTAQCTIHGFSEWNSTCEFHCHYSENQLLECCRRMVRLHQKAGTDKLTGVHRKYSSSKFGYIATKYEAAHFLVSDSH.

The interval 66–98 (SQRKQESCDKKKLDSLHPSISRSQEETKKLKPS) is disordered. Basic and acidic residues predominate over residues 68 to 80 (RKQESCDKKKLDS).

This sequence belongs to the cyclin family. Cyclin AB subfamily. Interacts with CDC20-1 and CDC20-2. Expressed in roots.

This chain is Cyclin-B2-2 (CYCB2-2), found in Arabidopsis thaliana (Mouse-ear cress).